A 442-amino-acid chain; its full sequence is Histidinol dehydrogenase (442 aa).

Residues Tyr136, Gln197, and Asn220 each contribute to the NAD(+) site. Substrate is bound by residues Ser243, Gln265, and His268. Zn(2+) contacts are provided by Gln265 and His268. Catalysis depends on proton acceptor residues Glu333 and His334. 4 residues coordinate substrate: His334, Asp367, Glu421, and His426. Residue Asp367 coordinates Zn(2+). Residue His426 participates in Zn(2+) binding.

This sequence belongs to the histidinol dehydrogenase family. The cofactor is Zn(2+).

The enzyme catalyses L-histidinol + 2 NAD(+) + H2O = L-histidine + 2 NADH + 3 H(+). It participates in amino-acid biosynthesis; L-histidine biosynthesis; L-histidine from 5-phospho-alpha-D-ribose 1-diphosphate: step 9/9. Its function is as follows. Catalyzes the sequential NAD-dependent oxidations of L-histidinol to L-histidinaldehyde and then to L-histidine. In Pseudomonas fluorescens (strain ATCC BAA-477 / NRRL B-23932 / Pf-5), this protein is Histidinol dehydrogenase.